We begin with the raw amino-acid sequence, 574 residues long: Type II methyltransferase M.PaeR7I (574 aa).

The protein belongs to the N(4)/N(6)-methyltransferase family. As to quaternary structure, monomer.

The catalysed reaction is a 2'-deoxyadenosine in DNA + S-adenosyl-L-methionine = an N(6)-methyl-2'-deoxyadenosine in DNA + S-adenosyl-L-homocysteine + H(+). A gamma subtype methylase, recognizes the double-stranded sequence 5'-CTCGAG-3', methylates A-5 on both strands, and protects the DNA from cleavage by the PaeR7I endonuclease. This Pseudomonas aeruginosa protein is Type II methyltransferase M.PaeR7I (paeR7IM).